The sequence spans 163 residues: ATP synthase subunit b 1 (163 aa).

Residues A7–V27 traverse the membrane as a helical segment.

It belongs to the ATPase B chain family. In terms of assembly, F-type ATPases have 2 components, F(1) - the catalytic core - and F(0) - the membrane proton channel. F(1) has five subunits: alpha(3), beta(3), gamma(1), delta(1), epsilon(1). F(0) has three main subunits: a(1), b(2) and c(10-14). The alpha and beta chains form an alternating ring which encloses part of the gamma chain. F(1) is attached to F(0) by a central stalk formed by the gamma and epsilon chains, while a peripheral stalk is formed by the delta and b chains.

The protein resides in the cell inner membrane. Its function is as follows. F(1)F(0) ATP synthase produces ATP from ADP in the presence of a proton or sodium gradient. F-type ATPases consist of two structural domains, F(1) containing the extramembraneous catalytic core and F(0) containing the membrane proton channel, linked together by a central stalk and a peripheral stalk. During catalysis, ATP synthesis in the catalytic domain of F(1) is coupled via a rotary mechanism of the central stalk subunits to proton translocation. Component of the F(0) channel, it forms part of the peripheral stalk, linking F(1) to F(0). This Rhodopseudomonas palustris (strain BisB5) protein is ATP synthase subunit b 1.